The chain runs to 152 residues: Large-conductance mechanosensitive channel (152 aa).

The next 3 membrane-spanning stretches (helical) occupy residues 21–41, 44–64, and 92–112; these read IDLA…DSLV, VVMP…NKFL, and GNFI…FWMV.

This sequence belongs to the MscL family. As to quaternary structure, homopentamer.

It localises to the cell inner membrane. Channel that opens in response to stretch forces in the membrane lipid bilayer. May participate in the regulation of osmotic pressure changes within the cell. In Bordetella pertussis (strain Tohama I / ATCC BAA-589 / NCTC 13251), this protein is Large-conductance mechanosensitive channel.